The following is a 788-amino-acid chain: Phosphoribosylformylglycinamidine synthase subunit PurL (788 aa).

His-50 is an active-site residue. ATP contacts are provided by Tyr-53 and Lys-92. A Mg(2+)-binding site is contributed by Glu-94. Substrate is bound by residues 95–98 (SHNH) and Arg-117. The Proton acceptor role is filled by His-96. Mg(2+) is bound at residue Asp-118. Gln-241 lines the substrate pocket. Residue Asp-269 coordinates Mg(2+). 313 to 315 (ESQ) contacts substrate. Asp-524 and Gly-561 together coordinate ATP. Asn-562 contacts Mg(2+). Ser-564 contributes to the substrate binding site.

It belongs to the FGAMS family. Monomer. Part of the FGAM synthase complex composed of 1 PurL, 1 PurQ and 2 PurS subunits.

Its subcellular location is the cytoplasm. The catalysed reaction is N(2)-formyl-N(1)-(5-phospho-beta-D-ribosyl)glycinamide + L-glutamine + ATP + H2O = 2-formamido-N(1)-(5-O-phospho-beta-D-ribosyl)acetamidine + L-glutamate + ADP + phosphate + H(+). It participates in purine metabolism; IMP biosynthesis via de novo pathway; 5-amino-1-(5-phospho-D-ribosyl)imidazole from N(2)-formyl-N(1)-(5-phospho-D-ribosyl)glycinamide: step 1/2. Functionally, part of the phosphoribosylformylglycinamidine synthase complex involved in the purines biosynthetic pathway. Catalyzes the ATP-dependent conversion of formylglycinamide ribonucleotide (FGAR) and glutamine to yield formylglycinamidine ribonucleotide (FGAM) and glutamate. The FGAM synthase complex is composed of three subunits. PurQ produces an ammonia molecule by converting glutamine to glutamate. PurL transfers the ammonia molecule to FGAR to form FGAM in an ATP-dependent manner. PurS interacts with PurQ and PurL and is thought to assist in the transfer of the ammonia molecule from PurQ to PurL. In Nostoc punctiforme (strain ATCC 29133 / PCC 73102), this protein is Phosphoribosylformylglycinamidine synthase subunit PurL.